A 472-amino-acid chain; its full sequence is 3-isopropylmalate dehydratase large subunit (472 aa).

[4Fe-4S] cluster-binding residues include cysteine 352, cysteine 412, and cysteine 415.

The protein belongs to the aconitase/IPM isomerase family. LeuC type 1 subfamily. As to quaternary structure, heterodimer of LeuC and LeuD. [4Fe-4S] cluster serves as cofactor.

It catalyses the reaction (2R,3S)-3-isopropylmalate = (2S)-2-isopropylmalate. It participates in amino-acid biosynthesis; L-leucine biosynthesis; L-leucine from 3-methyl-2-oxobutanoate: step 2/4. Catalyzes the isomerization between 2-isopropylmalate and 3-isopropylmalate, via the formation of 2-isopropylmaleate. This chain is 3-isopropylmalate dehydratase large subunit, found in Roseiflexus castenholzii (strain DSM 13941 / HLO8).